The following is a 412-amino-acid chain: Tyrosine--tRNA ligase (412 aa).

A 'HIGH' region motif is present at residues 48–57 (PSRPDLHLGH). Positions 232–236 (KMSKS) match the 'KMSKS' region motif. Lysine 235 is an ATP binding site. Residues 342-405 (VGLLNLMRHA…GKRRFARIRP (64 aa)) enclose the S4 RNA-binding domain.

The protein belongs to the class-I aminoacyl-tRNA synthetase family. TyrS type 2 subfamily. As to quaternary structure, homodimer.

It is found in the cytoplasm. The catalysed reaction is tRNA(Tyr) + L-tyrosine + ATP = L-tyrosyl-tRNA(Tyr) + AMP + diphosphate + H(+). In terms of biological role, catalyzes the attachment of tyrosine to tRNA(Tyr) in a two-step reaction: tyrosine is first activated by ATP to form Tyr-AMP and then transferred to the acceptor end of tRNA(Tyr). The chain is Tyrosine--tRNA ligase from Salinibacter ruber (strain DSM 13855 / M31).